A 344-amino-acid polypeptide reads, in one-letter code: MQTISLIRPDDWHLHVRDGAALATVVPHTARRFGRALIMPNLRPPVTTAAQALEYRARILAAVPPGQHFEPLMSLYLTDNTSPDEIDRAKASGAVVAVKLYPAGATTNSDAGVTAIEKVHAVLERMEKLGMVLCVHGEVTHGDVDVFDREQVFIEQVLAPLVARFPALRVVFEHITTAEAARFVQDAGPNVAATVTAHHLLLNRNAIFAGGIRPHHYCLPVLKRETHRRALVEAATSGNAKFFLGTDSAPHSRAAKETACGCAGCYTAHAAIELYAEAFEQAGALDRLEAFASLNGPAFYGLAPNAERITLAKDAWEVPGEYEYLHDDPLVPLRAGETVAWRVL.

Residues histidine 13 and histidine 15 each contribute to the Zn(2+) site. Substrate-binding positions include 15-17 (HVR) and asparagine 41. Zn(2+)-binding residues include lysine 99, histidine 136, and histidine 174. N6-carboxylysine is present on lysine 99. A substrate-binding site is contributed by histidine 136. Leucine 219 lines the substrate pocket. Position 247 (aspartate 247) interacts with Zn(2+). Aspartate 247 is an active-site residue. Substrate is bound by residues histidine 251 and alanine 263.

Belongs to the metallo-dependent hydrolases superfamily. DHOase family. Class II DHOase subfamily. Homodimer. Requires Zn(2+) as cofactor.

It catalyses the reaction (S)-dihydroorotate + H2O = N-carbamoyl-L-aspartate + H(+). The protein operates within pyrimidine metabolism; UMP biosynthesis via de novo pathway; (S)-dihydroorotate from bicarbonate: step 3/3. In terms of biological role, catalyzes the reversible cyclization of carbamoyl aspartate to dihydroorotate. The sequence is that of Dihydroorotase from Aromatoleum aromaticum (strain DSM 19018 / LMG 30748 / EbN1) (Azoarcus sp. (strain EbN1)).